The chain runs to 202 residues: Guanylate kinase (202 aa).

The Guanylate kinase-like domain maps to 3-181 (GNLFIITAPS…ALEDLRAIIR (179 aa)). 10–17 (APSGAGKT) is an ATP binding site.

This sequence belongs to the guanylate kinase family.

Its subcellular location is the cytoplasm. The enzyme catalyses GMP + ATP = GDP + ADP. Its function is as follows. Essential for recycling GMP and indirectly, cGMP. This is Guanylate kinase from Methylobacillus flagellatus (strain ATCC 51484 / DSM 6875 / VKM B-1610 / KT).